Consider the following 4306-residue polypeptide: Cytoplasmic dynein 2 heavy chain 1 (4306 aa).

Residues 1–1650 form a stem region; that stretch reads MAGSLSDVRK…YVQMVDSELQ (1650 aa). 145 to 152 serves as a coordination point for ATP; sequence LGVVLRKS. A coiled-coil region spans residues 669–696; the sequence is KELEGYIQKLQNAAERLATENRRLRKWH. 4 AAA regions span residues 1651 to 1875, 1941 to 2161, 2249 to 2505, and 2617 to 2862; these read YTYE…VLRG, SALK…KQND, LTAD…WVLG, and HYGR…ESCK. ATP contacts are provided by residues 1689-1696, 1979-1986, 2291-2298, and 2655-2662; these read GPAGTGKT, GPSGAGKS, GPEGCGKG, and GRSGVGRR. Positions 2880-3168 are stalk; it reads AISSSKRKEL…AEVSKAQETI (289 aa). Coiled-coil stretches lie at residues 2896–2981, 3108–3199, and 3407–3441; these read LQAG…KEVQ, LETE…LATL, and IQHE…SLLE. 2 AAA regions span residues 3243-3472 and 3689-3904; these read LCTE…LIQD and MALF…VIDR.

Belongs to the dynein heavy chain family. In terms of assembly, the cytoplasmic dynein complex 2 is probably composed by a heavy chain DYNC2H1 homodimer and a number of DYNC2LI1 light intermediate chains. In terms of tissue distribution, widely expressed both in ciliated and unciliated tissues. Detected in brain and testis (at protein level).

The protein resides in the cytoplasm. The protein localises to the cytoskeleton. It is found in the cilium axoneme. It localises to the cell membrane. In terms of biological role, may function as a motor for intraflagellar retrograde transport. Functions in cilia biogenesis. May play a role in transport between endoplasmic reticulum and Golgi or organization of the Golgi in cells. The chain is Cytoplasmic dynein 2 heavy chain 1 (Dync2h1) from Rattus norvegicus (Rat).